We begin with the raw amino-acid sequence, 185 residues long: Ribulose bisphosphate carboxylase small subunit, chloroplastic 2 (185 aa).

The N-terminal 45 residues, 1 to 45, are a transit peptide targeting the chloroplast; that stretch reads MAAVIAKSSVSAAVARPARSSVRPMAALKPAVKAAPVAAPAQANQ. N-methylmethionine is present on M46.

It belongs to the RuBisCO small chain family. In terms of assembly, heterohexadecamer of 8 large and 8 small subunits.

It localises to the plastid. The protein resides in the chloroplast. The protein localises to the chloroplast stroma. RuBisCO catalyzes two reactions: the carboxylation of D-ribulose 1,5-bisphosphate, the primary event in carbon dioxide fixation, as well as the oxidative fragmentation of the pentose substrate. Both reactions occur simultaneously and in competition at the same active site. Although the small subunit is not catalytic it is essential for maximal activity. The protein is Ribulose bisphosphate carboxylase small subunit, chloroplastic 2 of Chlamydomonas reinhardtii (Chlamydomonas smithii).